Here is a 543-residue protein sequence, read N- to C-terminus: DM7 family protein GG19680 (543 aa).

The span at 415–430 shows a compositional bias: basic and acidic residues; the sequence is GETQEMDEAHPTKEES. Residues 415 to 443 form a disordered region; the sequence is GETQEMDEAHPTKEESKSEEEGEVQSGSQ.

This sequence belongs to the DM7 family.

In Drosophila erecta (Fruit fly), this protein is DM7 family protein GG19680.